Reading from the N-terminus, the 160-residue chain is SsrA-binding protein (160 aa).

A disordered region spans residues 130-160 (LAKGKKKHDKRADQKEQDWQRQKQRLMKHKV). The span at 139–150 (KRADQKEQDWQR) shows a compositional bias: basic and acidic residues. The segment covering 151–160 (QKQRLMKHKV) has biased composition (basic residues).

This sequence belongs to the SmpB family.

The protein localises to the cytoplasm. Its function is as follows. Required for rescue of stalled ribosomes mediated by trans-translation. Binds to transfer-messenger RNA (tmRNA), required for stable association of tmRNA with ribosomes. tmRNA and SmpB together mimic tRNA shape, replacing the anticodon stem-loop with SmpB. tmRNA is encoded by the ssrA gene; the 2 termini fold to resemble tRNA(Ala) and it encodes a 'tag peptide', a short internal open reading frame. During trans-translation Ala-aminoacylated tmRNA acts like a tRNA, entering the A-site of stalled ribosomes, displacing the stalled mRNA. The ribosome then switches to translate the ORF on the tmRNA; the nascent peptide is terminated with the 'tag peptide' encoded by the tmRNA and targeted for degradation. The ribosome is freed to recommence translation, which seems to be the essential function of trans-translation. In Alkalilimnicola ehrlichii (strain ATCC BAA-1101 / DSM 17681 / MLHE-1), this protein is SsrA-binding protein.